Reading from the N-terminus, the 314-residue chain is Ribosomal protein L11 methyltransferase (314 aa).

Residues Thr152, Gly184, Asp206, and Asn248 each contribute to the S-adenosyl-L-methionine site.

Belongs to the methyltransferase superfamily. PrmA family.

Its subcellular location is the cytoplasm. It carries out the reaction L-lysyl-[protein] + 3 S-adenosyl-L-methionine = N(6),N(6),N(6)-trimethyl-L-lysyl-[protein] + 3 S-adenosyl-L-homocysteine + 3 H(+). Functionally, methylates ribosomal protein L11. In Geotalea daltonii (strain DSM 22248 / JCM 15807 / FRC-32) (Geobacter daltonii), this protein is Ribosomal protein L11 methyltransferase.